The following is a 330-amino-acid chain: 4-hydroxythreonine-4-phosphate dehydrogenase (330 aa).

2 residues coordinate substrate: His136 and Thr137. Residues His166, His211, and His266 each contribute to the a divalent metal cation site. Substrate-binding residues include Lys274, Asn283, and Arg292.

It belongs to the PdxA family. Homodimer. The cofactor is Zn(2+). It depends on Mg(2+) as a cofactor. Co(2+) serves as cofactor.

The protein resides in the cytoplasm. The catalysed reaction is 4-(phosphooxy)-L-threonine + NAD(+) = 3-amino-2-oxopropyl phosphate + CO2 + NADH. It functions in the pathway cofactor biosynthesis; pyridoxine 5'-phosphate biosynthesis; pyridoxine 5'-phosphate from D-erythrose 4-phosphate: step 4/5. Functionally, catalyzes the NAD(P)-dependent oxidation of 4-(phosphooxy)-L-threonine (HTP) into 2-amino-3-oxo-4-(phosphooxy)butyric acid which spontaneously decarboxylates to form 3-amino-2-oxopropyl phosphate (AHAP). The sequence is that of 4-hydroxythreonine-4-phosphate dehydrogenase from Erwinia tasmaniensis (strain DSM 17950 / CFBP 7177 / CIP 109463 / NCPPB 4357 / Et1/99).